The primary structure comprises 165 residues: MTDSELMQLSEQVGQALKARGATVTTAESCTGGWVAKVITDIAGSSAWFERGFVTYSNEAKAQMIGVREETLAQHGAVSEPVVVEMAIGALKAARADYAVSISGIAGPDGGSEEKPVGTVWFAFATARGEGITWRECFSGDRDAVRRQATAYALQTLWQQFLQNT.

It belongs to the CinA family. PncC subfamily. Homodimer.

It catalyses the reaction beta-nicotinamide D-ribonucleotide + H2O = nicotinate beta-D-ribonucleotide + NH4(+). Has NMN aminohydrolase activity, not active on other substrates. The protein is Nicotinamide-nucleotide amidohydrolase PncC (pncC) of Shigella flexneri.